A 654-amino-acid chain; its full sequence is Broad substrate specificity ATP-binding cassette transporter ABCG2 (654 aa).

Residues 1 to 394 are Cytoplasmic-facing; sequence MSSSNVEVFI…KNLLGNPQAS (394 aa). An ABC transporter domain is found at 37–286; sequence LSFHNICYRV…FESAGYHCEA (250 aa). ATP is bound by residues 80-87, 184-190, glutamate 211, and histidine 243; these read GPTGGGKS and RGVSGGE. Residues 388-650 form the ABC transmembrane type-2 domain; it reads LGNPQASIAQ…TIAYLKLLFL (263 aa). Residues 395-415 traverse the membrane as a helical segment; it reads IAQIIVTVILGLVIGAIYFGL. Residues 416–427 lie on the Extracellular side of the membrane; that stretch reads NNDSTGIQNRAG. Residue asparagine 417 is glycosylated (N-linked (GlcNAc...) asparagine). The helical transmembrane segment at 428–448 threads the bilayer; sequence VLFFLTTNQCFSSVSAVELFV. Topologically, residues 449–476 are cytoplasmic; sequence VEKKLFIHEYISGYYRVSSYFFGKLLSD. Residues 477–497 traverse the membrane as a helical segment; sequence LLPMRMLPSIIFTCIVYFMLG. Residues 498 to 505 are Extracellular-facing; that stretch reads LKPTADAF. Residues 506–526 form a helical membrane-spanning segment; sequence FIMMFTLMMVAYSASSMALAI. The Cytoplasmic portion of the chain corresponds to 527–534; that stretch reads AAGQSVVS. A helical membrane pass occupies residues 535-555; sequence VATLLMTICFVFMMIFSGLLV. Residues asparagine 556, asparagine 595, and asparagine 599 are each glycosylated (N-linked (GlcNAc...) asparagine). Residues 556–629 lie on the Extracellular side of the membrane; it reads NLTTIASWLS…LSPWGLWKNH (74 aa). An intrachain disulfide couples cysteine 591 to cysteine 607. Residues 630–650 traverse the membrane as a helical segment; that stretch reads VALACMIVIFLTIAYLKLLFL. Residues 651–654 lie on the Cytoplasmic side of the membrane; that stretch reads KKYS.

This sequence belongs to the ABC transporter superfamily. ABCG family. Eye pigment precursor importer (TC 3.A.1.204) subfamily. Homodimer; disulfide-linked. The minimal functional unit is a homodimer, but the major oligomeric form in plasma membrane is a homotetramer with possibility of higher order oligomerization up to homododecamers. Post-translationally, N-glycosylated. Glycosylation-deficient ABCG2 is normally expressed and functional. In terms of processing, phosphorylated. Phosphorylation may regulate the localization to the plasma membrane, the homooligomerization and therefore, the activity of the transporter.

Its subcellular location is the cell membrane. The protein localises to the apical cell membrane. It localises to the mitochondrion membrane. The enzyme catalyses ATP + H2O + xenobioticSide 1 = ADP + phosphate + xenobioticSide 2.. It catalyses the reaction urate(in) + ATP + H2O = urate(out) + ADP + phosphate + H(+). The catalysed reaction is indoxyl sulfate(in) + ATP + H2O = indoxyl sulfate(out) + ADP + phosphate + H(+). It carries out the reaction sphing-4-enine 1-phosphate(in) + ATP + H2O = sphing-4-enine 1-phosphate(out) + ADP + phosphate + H(+). The enzyme catalyses estrone 3-sulfate(in) + ATP + H2O = estrone 3-sulfate(out) + ADP + phosphate + H(+). It catalyses the reaction dehydroepiandrosterone 3-sulfate(in) + ATP + H2O = dehydroepiandrosterone 3-sulfate(out) + ADP + phosphate + H(+). The catalysed reaction is 4-methylumbelliferone sulfate(in) + ATP + H2O = 4-methylumbelliferone sulfate(out) + ADP + phosphate + H(+). It carries out the reaction 5,7-dimethyl-2-methylamino-4-(3-pyridylmethyl)-1,3-benzothiazol-6-yl beta-D-glucuronate(in) + ATP + H2O = 5,7-dimethyl-2-methylamino-4-(3-pyridylmethyl)-1,3-benzothiazol-6-yl beta-D-glucuronate(out) + ADP + phosphate + H(+). The enzyme catalyses 4-methylumbelliferone beta-D-glucuronate(in) + ATP + H2O = 4-methylumbelliferone beta-D-glucuronate(out) + ADP + phosphate + H(+). It catalyses the reaction 5,7-dimethyl-2-methylamino-4-(3-pyridylmethyl)-1,3-benzothiazol-6-yl sulfate(in) + ATP + H2O = 5,7-dimethyl-2-methylamino-4-(3-pyridylmethyl)-1,3-benzothiazol-6-yl sulfate(out) + ADP + phosphate + H(+). The catalysed reaction is 17beta-estradiol 17-O-(beta-D-glucuronate)(in) + ATP + H2O = 17beta-estradiol 17-O-(beta-D-glucuronate)(out) + ADP + phosphate + H(+). It carries out the reaction methotrexate(in) + ATP + H2O = methotrexate(out) + ADP + phosphate + H(+). The enzyme catalyses riboflavin(in) + ATP + H2O = riboflavin(out) + ADP + phosphate + H(+). It catalyses the reaction pheophorbide a(in) + ATP + H2O = pheophorbide a(out) + ADP + phosphate + H(+). The catalysed reaction is itaconate(in) + ATP + H2O = itaconate(out) + ADP + phosphate + H(+). Broad substrate specificity ATP-dependent transporter of the ATP-binding cassette (ABC) family that actively extrudes a wide variety of physiological compounds, dietary toxins and xenobiotics from cells. Involved in porphyrin homeostasis, mediating the export of protoporphyrin IX (PPIX) from both mitochondria to cytosol and cytosol to extracellular space, it also functions in the cellular export of heme. Also mediates the efflux of sphingosine-1-P from cells. Acts as a urate exporter functioning in both renal and extrarenal urate excretion. In kidney, it also functions as a physiological exporter of the uremic toxin indoxyl sulfate. Also involved in the excretion of steroids like estrone 3-sulfate/E1S, 3beta-sulfooxy-androst-5-en-17-one/DHEAS, and other sulfate conjugates. Mediates the secretion of the riboflavin and biotin vitamins into milk. Extrudes pheophorbide a, a phototoxic porphyrin catabolite of chlorophyll, reducing its bioavailability. Plays an important role in the exclusion of xenobiotics from the brain. It confers to cells a resistance to multiple drugs and other xenobiotics including mitoxantrone, pheophorbide, camptothecin, methotrexate, azidothymidine, and the anthracyclines daunorubicin and doxorubicin, through the control of their efflux. In placenta, it limits the penetration of drugs from the maternal plasma into the fetus. May play a role in early stem cell self-renewal by blocking differentiation. In inflammatory macrophages, exports itaconate from the cytosol to the extracellular compartment and limits the activation of TFEB-dependent lysosome biogenesis involved in antibacterial innate immune response. This is Broad substrate specificity ATP-binding cassette transporter ABCG2 (ABCG2) from Macaca mulatta (Rhesus macaque).